The sequence spans 382 residues: GDP-mannose transporter 1 (382 aa).

Residues 1 to 40 (MADDKKTNEYTVEMDKLDHGNKNFEAPAPAVRPRGPPAAQ) lie on the Cytoplasmic side of the membrane. The chain crosses the membrane as a helical span at residues 41–61 (LANNPILPVLAYCGSSILMTV). Residues 62 to 71 (MNKYVLSGTD) lie on the Lumenal side of the membrane. Residues 72–92 (FNLNFFLLCVQSIVCIVAIQT) traverse the membrane as a helical segment. Over 93–110 (CKSSKLITYRDFNSDEAK) the chain is Cytoplasmic. The chain crosses the membrane as a helical span at residues 111–127 (KWFPITLLLIGMIYTGS). Residues 128 to 134 (KALQYLS) are Lumenal-facing. A helical membrane pass occupies residues 135–151 (IPVYTIFKNLTIILIAY). Over 152-160 (GEVLWFGGS) the chain is Cytoplasmic. The chain crosses the membrane as a helical span at residues 161–182 (VTGMTLFSFGLMVLSSIIAAWA). Topologically, residues 183–200 (DIKHAVESSGDATAKVST) are lumenal. The chain crosses the membrane as a helical span at residues 201–221 (LNAGYIWMLINCLCTSSYVLG). Residues 222-233 (MRKRIKLTNFKD) are Cytoplasmic-facing. The chain crosses the membrane as a helical span at residues 234-254 (FDTMFYNNLLSIPVLLVLTFL). Residues 255 to 274 (MEDWSSANIARNFPPADRNG) are Lumenal-facing. A helical membrane pass occupies residues 275 to 295 (ILFAMILSGLSSVFISYTSAW). The Cytoplasmic portion of the chain corresponds to 296–303 (CVRVTSST). Residues 304–324 (TYSMVGALNKLPIALSGLIFF) traverse the membrane as a helical segment. The Lumenal portion of the chain corresponds to 325–327 (DAP). A helical membrane pass occupies residues 328–348 (VTFPSVSAIVVGFISGIVYAV). Residues 349–382 (AKIKQSAKPKTGVLPMSNPPVSASSQSMRDSLRS) lie on the Cytoplasmic side of the membrane. The tract at residues 358 to 382 (KTGVLPMSNPPVSASSQSMRDSLRS) is disordered. Residues 367 to 382 (PPVSASSQSMRDSLRS) show a composition bias toward polar residues.

It belongs to the TPT transporter family. SLC35D subfamily. In terms of assembly, homooligomer.

The protein resides in the golgi apparatus membrane. Its subcellular location is the cytoplasmic vesicle membrane. The protein localises to the endoplasmic reticulum membrane. Its function is as follows. Involved in the import of GDP-mannose from the cytoplasm into the Golgi lumen. In Neosartorya fischeri (strain ATCC 1020 / DSM 3700 / CBS 544.65 / FGSC A1164 / JCM 1740 / NRRL 181 / WB 181) (Aspergillus fischerianus), this protein is GDP-mannose transporter 1 (gmt1).